The primary structure comprises 547 residues: Chaperonin GroEL (547 aa).

ATP is bound by residues 30 to 33, lysine 51, 87 to 91, glycine 415, 479 to 481, and aspartate 495; these read TLGP, DGTTT, and NAA.

The protein belongs to the chaperonin (HSP60) family. As to quaternary structure, forms a cylinder of 14 subunits composed of two heptameric rings stacked back-to-back. Interacts with the co-chaperonin GroES.

It localises to the cytoplasm. The catalysed reaction is ATP + H2O + a folded polypeptide = ADP + phosphate + an unfolded polypeptide.. Together with its co-chaperonin GroES, plays an essential role in assisting protein folding. The GroEL-GroES system forms a nano-cage that allows encapsulation of the non-native substrate proteins and provides a physical environment optimized to promote and accelerate protein folding. The protein is Chaperonin GroEL of Delftia acidovorans (strain DSM 14801 / SPH-1).